The primary structure comprises 864 residues: Valine--tRNA ligase (864 aa).

The short motif at 42–52 (PTISGKLHIGH) is the 'HIGH' region element. Positions 589 to 593 (KMSKS) match the 'KMSKS' region motif. K592 lines the ATP pocket.

Belongs to the class-I aminoacyl-tRNA synthetase family. ValS type 2 subfamily. Monomer.

It is found in the cytoplasm. It carries out the reaction tRNA(Val) + L-valine + ATP = L-valyl-tRNA(Val) + AMP + diphosphate. Functionally, catalyzes the attachment of valine to tRNA(Val). As ValRS can inadvertently accommodate and process structurally similar amino acids such as threonine, to avoid such errors, it has a 'posttransfer' editing activity that hydrolyzes mischarged Thr-tRNA(Val) in a tRNA-dependent manner. This Wolbachia pipientis wMel protein is Valine--tRNA ligase.